A 627-amino-acid chain; its full sequence is (-)-alpha-terpineol synthase, chloroplastic (627 aa).

Residues 1-52 (MDLISVLPSASKSCVCLHKPLSSSTHKLKPFCKTIRILVMPRRWEFARPSMS) constitute a chloroplast transit peptide. Positions 378, 382, and 530 each coordinate Mg(2+). Positions 378-382 (DDMYD) match the DDXXD motif motif.

It belongs to the terpene synthase family. Tpsd subfamily. Mg(2+) serves as cofactor. It depends on Mn(2+) as a cofactor.

Its subcellular location is the plastid. The protein localises to the chloroplast. The catalysed reaction is (2E)-geranyl diphosphate + H2O = (S)-alpha-terpineol + diphosphate. It participates in terpene metabolism; oleoresin biosynthesis. In terms of biological role, involved in defensive oleoresin formation in conifers in response to insect attack or other injury. Involved in monoterpene (C10) olefins biosynthesis. Produces 57.3% alpha-terpineol (15.1% (+)/84.9% (-)), 27.6% limonene (25.2% (+)/74.8% (-)), 8% terpinolene, 4.7% beta-pinene (14.8% (+)/85.2% (-)), 1.3% alpha-pinene (100% (+)) and 1.1% myrcene. The sequence is that of (-)-alpha-terpineol synthase, chloroplastic (PT10) from Pinus taeda (Loblolly pine).